The primary structure comprises 166 residues: Small ribosomal subunit protein uS5 (166 aa).

The S5 DRBM domain occupies 12 to 75 (YIEKLVQVNR…EAARRNMIQV (64 aa)).

Belongs to the universal ribosomal protein uS5 family. As to quaternary structure, part of the 30S ribosomal subunit. Contacts proteins S4 and S8.

Its function is as follows. With S4 and S12 plays an important role in translational accuracy. In terms of biological role, located at the back of the 30S subunit body where it stabilizes the conformation of the head with respect to the body. The chain is Small ribosomal subunit protein uS5 from Ectopseudomonas mendocina (strain ymp) (Pseudomonas mendocina).